A 227-amino-acid polypeptide reads, in one-letter code: PKHD-type hydroxylase Patl_2273 (227 aa).

The 101-residue stretch at K78–S178 folds into the Fe2OG dioxygenase domain. The Fe cation site is built by H96, D98, and H159. R169 lines the 2-oxoglutarate pocket.

Fe(2+) is required as a cofactor. It depends on L-ascorbate as a cofactor.

The protein is PKHD-type hydroxylase Patl_2273 of Pseudoalteromonas atlantica (strain T6c / ATCC BAA-1087).